The following is a 639-amino-acid chain: Chaperone protein DnaK (639 aa).

Threonine 198 is subject to Phosphothreonine; by autocatalysis. Over residues 603-618 (AKAQTQGGAQEGAAKQ) the composition is skewed to low complexity. The tract at residues 603-639 (AKAQTQGGAQEGAAKQSNATADDVVDAEFEEVKDDKK) is disordered. Acidic residues predominate over residues 625 to 639 (DVVDAEFEEVKDDKK).

It belongs to the heat shock protein 70 family.

In terms of biological role, acts as a chaperone. The chain is Chaperone protein DnaK from Shewanella sp. (strain ANA-3).